The sequence spans 175 residues: Endothelin-2 (175 aa).

The N-terminal stretch at 1 to 21 (MVSAWCSIALALLLALHEGKG) is a signal peptide. A propeptide spanning residues 22–43 (QAAATLEQPASAPKGRGPHLRF) is cleaved from the precursor. Cystine bridges form between Cys46–Cys60 and Cys48–Cys56. The propeptide occupies 67–175 (VNTAGQTAPY…IPAYSRWRKR (109 aa)). The interval 93 to 108 (CECSTAGDSACATFCH) is endothelin-like.

It belongs to the endothelin/sarafotoxin family.

The protein resides in the secreted. In terms of biological role, vasoconstrictor. This Mus musculus (Mouse) protein is Endothelin-2 (Edn2).